The following is a 1221-amino-acid chain: MLLQESAGVWLALALVTALTPSPSMAVPWQDCTGAECPLLENCIEEALEPGACCATCVQQGCACEGYQYYDCVQGGFVDGRVPAGQSYFVDFGSTECSCPPGGGKISCQFMLCPELPPNCIEAVVVADSCPQCGQVGCVHSGRKYAAGHTVHLSSCRACHCPDAGGELICYQLPGCHGNFSDAEEGDSERQYEDPYSYDQEVAEAEATTAIVNEVQAGAEGPPAALGGGNLPPSSIRVTPWPVALPRPTAAAALGPPAPVQAKARRVTLDTEEDEEEEEEETLVTEPPTAGSPGRLDSLPTRSPARPGFPVQEKEAEAKAGPEENLIPDAQVTPRSVMQEGAAPLPRSGLAALSPSLATDSSSEDPVKPSDHPTLSTLPPDRAQVSPSPETPEEIPQHPQLLPRFRAEEDIDPNSVHSVPRGDLDGSTKDLIETCCAAGQQWAIDNDECQEIPENGAQSDICRIAQRQCCISYLKEKSCVAGVMGAKEGETCGAEDNDTCGVSLYKQCCDCCGLGLRVRAEGQSCESNPNLGYPCNHVMLSCCEGEEPLIVPEVRRPPEPEAAPRRVSEMEMASREALSLGTEAELPNSLPGDDQDECLMLPGELCQHLCINTVGSYRCACFPGFELQGDGRTCRPDRGAPQLDTARESAPRSESAQVSPNTIPLPVPQPNTCKDNGPCRQVCRVVGDTAMCSCFPGYAIMADGVSCEDQDECLMGTHDCSWKQFCVNTLGSFYCVNHTVLCAEGYILNAHRKCVDINECVTDLHTCTRAEHCVNTPGSFQCYKALTCEPGYVLTDGECTDVDECVTGTHNCQAGFSCQNTKGSFYCQARQRCMDGFLQDPEGNCVDINECTSLLEPCRSGFSCINTVGSYTCQRNPLVCGRGYHANEEGSECVDVNECETGVHRCGEGQLCYNLPGSYRCDCKPGFQRDAFGRTCIDVNECWVSPGRLCQHTCENTPGSYRCSCAAGFLLAADGKHCEDVNECETRRCSQECANIYGSYQCYCRQGYQLAEDGHTCTDIDECAQGAGILCTFRCVNVPGSYQCACPEQGYTMMANGRSCKDLDECALGTHNCSEAETCHNIQGSFRCLRFDCPPNYVRVSETKCERTTCQDITECQTSPARITHYQLNFQTGLLVPAHIFRIGPAPAFAGDTISLTITKGNEEGYFVTRRLNAYTGVVSLQRSVLEPRDFALDVEMKLWRQGSVTTFLAKMYIFFTTFAP.

The signal sequence occupies residues methionine 1–alanine 26. The subdomain NA (Cys-rich) stretch occupies residues valine 27 to cysteine 176. The segment at valine 27 to threonine 434 is n. The subdomain NB (Cys-free) stretch occupies residues histidine 177 to threonine 434. A glycan (N-linked (GlcNAc...) asparagine) is linked at asparagine 179. 2 disordered regions span residues proline 248 to aspartate 329 and glycine 341 to proline 399. Acidic residues predominate over residues aspartate 270–leucine 283. Over residues glutamine 312–proline 322 the composition is skewed to basic and acidic residues. The short motif at arginine 421–aspartate 423 is the Cell attachment site element. 11 cysteine pairs are disulfide-bonded: cysteine 435–cysteine 462, cysteine 436–cysteine 469, cysteine 449–cysteine 470, cysteine 479–cysteine 508, cysteine 492–cysteine 509, cysteine 511–cysteine 535, cysteine 512–cysteine 542, cysteine 525–cysteine 543, cysteine 598–cysteine 610, cysteine 606–cysteine 619, and cysteine 621–cysteine 634. Anaphylatoxin-like domains follow at residues cysteine 435–lysine 477, serine 478–aspartate 510, and cysteine 511–cysteine 543. The N-linked (GlcNAc...) asparagine glycan is linked to asparagine 497. The 42-residue stretch at aspartate 594–arginine 635 folds into the EGF-like 1; calcium-binding domain. The segment at threonine 633–asparagine 661 is disordered. Polar residues predominate over residues arginine 652 to asparagine 661. One can recognise an EGF-like 2 domain in the interval glutamine 669–glutamate 708. Intrachain disulfides connect cysteine 673–cysteine 683, cysteine 679–cysteine 692, cysteine 694–cysteine 707, cysteine 713–cysteine 726, and cysteine 720–cysteine 735. One can recognise an EGF-like 3; calcium-binding domain in the interval aspartate 709–valine 755. A glycan (N-linked (GlcNAc...) asparagine) is linked at asparagine 737. Cysteine 742 and cysteine 754 are oxidised to a cystine. The EGF-like 4; calcium-binding domain maps to aspartate 756–threonine 800. Positions aspartate 801 to valine 846 constitute an EGF-like 5; calcium-binding domain. Cystine bridges form between cysteine 805-cysteine 818, cysteine 812-cysteine 827, and cysteine 833-cysteine 845. Positions aspartate 847–valine 894 constitute an EGF-like 6; calcium-binding domain. In terms of domain architecture, EGF-like 7; calcium-binding spans aspartate 895 to isoleucine 937. Cystine bridges form between cysteine 899–cysteine 912, cysteine 906–cysteine 921, cysteine 923–cysteine 936, cysteine 942–cysteine 954, cysteine 950–cysteine 963, cysteine 965–cysteine 978, cysteine 984–cysteine 993, cysteine 989–cysteine 1002, cysteine 1004–cysteine 1017, cysteine 1023–cysteine 1035, cysteine 1031–cysteine 1044, cysteine 1046–cysteine 1060, cysteine 1066–cysteine 1079, cysteine 1073–cysteine 1088, and cysteine 1093–cysteine 1105. In terms of domain architecture, EGF-like 8; calcium-binding spans aspartate 938 to glutamate 979. Positions aspartate 980 to threonine 1018 constitute an EGF-like 9; calcium-binding domain. An EGF-like 10; calcium-binding domain is found at aspartate 1019–lysine 1061. One can recognise an EGF-like 11; calcium-binding domain in the interval aspartate 1062–glutamate 1106. N-linked (GlcNAc...) asparagine glycosylation is present at asparagine 1072. The segment at glutamine 1111–proline 1221 is domain III.

It belongs to the fibulin family. As to quaternary structure, homotrimer; disulfide-linked. Interacts with LAMA2. Interacts with FBN1 (via N-terminal domain). Forms a ternary complex with ELN and FBN1. Component of both basement membranes and other connective tissues.

It localises to the secreted. The protein localises to the extracellular space. It is found in the extracellular matrix. Functionally, its binding to fibronectin and some other ligands is calcium dependent. May act as an adapter that mediates the interaction between FBN1 and ELN. The protein is Fibulin-2 (Fbln2) of Mus musculus (Mouse).